Consider the following 129-residue polypeptide: MTTESLETLVEKLSNLTVLELSQLKKLLEEKWDVTASAPVVAVAAGGGGEAPVAAEPTEFAVTLEDVPADKKIGVLKVVREVTGLALKEAKEMTEGLPKTVKEKTSKSDAEDTVKKLQDAGAKASFKGL.

Positions 94–113 (TEGLPKTVKEKTSKSDAEDT) are disordered.

The protein belongs to the bacterial ribosomal protein bL12 family. In terms of assembly, homodimer. Part of the ribosomal stalk of the 50S ribosomal subunit. Forms a multimeric L10(L12)X complex, where L10 forms an elongated spine to which 2 to 4 L12 dimers bind in a sequential fashion. Binds GTP-bound translation factors.

Functionally, forms part of the ribosomal stalk which helps the ribosome interact with GTP-bound translation factors. Is thus essential for accurate translation. This Chlamydia pneumoniae (Chlamydophila pneumoniae) protein is Large ribosomal subunit protein bL12.